We begin with the raw amino-acid sequence, 316 residues long: 1-phosphofructokinase (316 aa).

Residues 225 to 230 (SMGAGG) and 256 to 257 (GD) contribute to the ATP site. Aspartate 257 (proton acceptor) is an active-site residue.

The protein belongs to the carbohydrate kinase PfkB family.

The enzyme catalyses beta-D-fructose 1-phosphate + ATP = beta-D-fructose 1,6-bisphosphate + ADP + H(+). Functionally, catalyzes the ATP-dependent phosphorylation of fructose-l-phosphate to fructose-l,6-bisphosphate. The polypeptide is 1-phosphofructokinase (Rhodobacter capsulatus (Rhodopseudomonas capsulata)).